A 135-amino-acid chain; its full sequence is ATP synthase epsilon chain (135 aa).

The protein belongs to the ATPase epsilon chain family. As to quaternary structure, F-type ATPases have 2 components, CF(1) - the catalytic core - and CF(0) - the membrane proton channel. CF(1) has five subunits: alpha(3), beta(3), gamma(1), delta(1), epsilon(1). CF(0) has three main subunits: a, b and c.

It localises to the cell inner membrane. Produces ATP from ADP in the presence of a proton gradient across the membrane. The sequence is that of ATP synthase epsilon chain from Bradyrhizobium sp. (strain BTAi1 / ATCC BAA-1182).